The following is a 221-amino-acid chain: Translation initiation factor 6 (221 aa).

This sequence belongs to the eIF-6 family.

In terms of biological role, binds to the 50S ribosomal subunit and prevents its association with the 30S ribosomal subunit to form the 70S initiation complex. The sequence is that of Translation initiation factor 6 from Nitrosopumilus maritimus (strain SCM1).